The following is a 115-amino-acid chain: Probable non-functional T cell receptor beta variable 23-1 (115 aa).

Residues 1–21 (MGTRLLGCAALCLLAADSFHA) form the signal peptide. One can recognise an Ig-like domain in the interval 22–115 (KVTQTPGHLV…TALYLCASSQ (94 aa)). C42 and C111 are joined by a disulfide.

Alpha-beta TR is a heterodimer composed of an alpha and beta chain; disulfide-linked. The alpha-beta TR is associated with the transmembrane signaling CD3 coreceptor proteins to form the TR-CD3 (TcR or TCR). The assembly of alpha-beta TR heterodimers with CD3 occurs in the endoplasmic reticulum where a single alpha-beta TR heterodimer associates with one CD3D-CD3E heterodimer, one CD3G-CD3E heterodimer and one CD247 homodimer forming a stable octameric structure. CD3D-CD3E and CD3G-CD3E heterodimers preferentially associate with TR alpha and TR beta chains, respectively. The association of the CD247 homodimer is the last step of TcR assembly in the endoplasmic reticulum and is required for transport to the cell surface.

Its subcellular location is the cell membrane. Functionally, probable non-functional open reading frame (ORF) of V region of the variable domain of T cell receptor (TR) beta chain. Non-functional ORF generally cannot participate in the synthesis of a productive T cell receptor (TR) chain due to altered V-(D)-J or switch recombination and/or splicing site (at mRNA level) and/or conserved amino acid change (protein level). Alpha-beta T cell receptors are antigen specific receptors which are essential to the immune response and are present on the cell surface of T lymphocytes. Recognize peptide-major histocompatibility (MH) (pMH) complexes that are displayed by antigen presenting cells (APC), a prerequisite for efficient T cell adaptive immunity against pathogens. Binding of alpha-beta TR to pMH complex initiates TR-CD3 clustering on the cell surface and intracellular activation of LCK that phosphorylates the ITAM motifs of CD3G, CD3D, CD3E and CD247 enabling the recruitment of ZAP70. In turn ZAP70 phosphorylates LAT, which recruits numerous signaling molecules to form the LAT signalosome. The LAT signalosome propagates signal branching to three major signaling pathways, the calcium, the mitogen-activated protein kinase (MAPK) kinase and the nuclear factor NF-kappa-B (NF-kB) pathways, leading to the mobilization of transcription factors that are critical for gene expression and essential for T cell growth and differentiation. The T cell repertoire is generated in the thymus, by V-(D)-J rearrangement. This repertoire is then shaped by intrathymic selection events to generate a peripheral T cell pool of self-MH restricted, non-autoaggressive T cells. Post-thymic interaction of alpha-beta TR with the pMH complexes shapes TR structural and functional avidity. The protein is Probable non-functional T cell receptor beta variable 23-1 of Homo sapiens (Human).